A 277-amino-acid chain; its full sequence is Glutamate racemase (277 aa).

Substrate is bound by residues 13–14 (DS) and 45–46 (YG). Residue Cys76 is the Proton donor/acceptor of the active site. 77–78 (NT) lines the substrate pocket. Residue Cys186 is the Proton donor/acceptor of the active site. Residue 187–188 (TH) participates in substrate binding.

This sequence belongs to the aspartate/glutamate racemases family.

It carries out the reaction L-glutamate = D-glutamate. It functions in the pathway cell wall biogenesis; peptidoglycan biosynthesis. Its function is as follows. Provides the (R)-glutamate required for cell wall biosynthesis. The polypeptide is Glutamate racemase (Ralstonia nicotianae (strain ATCC BAA-1114 / GMI1000) (Ralstonia solanacearum)).